Here is a 283-residue protein sequence, read N- to C-terminus: 1-acyl-sn-glycerol-3-phosphate acyltransferase alpha (283 aa).

Positions 1–26 (MDLWPGAWMLLLLLFLLLLFLLPTLW) are cleaved as a signal peptide. Residues 27 to 37 (FCSPSAKYFFK) lie on the Lumenal side of the membrane. The helical transmembrane segment at 38–58 (MAFYNGWILFLAVLAIPVCAV) threads the bilayer. The Cytoplasmic portion of the chain corresponds to 59 to 127 (RGRNVENMKI…PGRCVPIAKR (69 aa)). The HXXXXD motif motif lies at 104 to 109 (HQSSLD). A helical transmembrane segment spans residues 128–148 (ELLWAGSAGLACWLAGVIFID). The Lumenal segment spans residues 149-283 (RKRTGDAISV…DYLKKPGGGG (135 aa)). Positions 178–181 (EGTR) match the EGTR motif motif.

This sequence belongs to the 1-acyl-sn-glycerol-3-phosphate acyltransferase family. Widely expressed. Expressed in adipose tissue and at high levels in testis and pancreas. Expressed at lower levels in tissues such as heart, brain, placenta, kidney, lung, spleen, thymus, prostate, ovary, intestine, colon, leukocyte and liver.

The protein resides in the endoplasmic reticulum membrane. The catalysed reaction is a 1-acyl-sn-glycero-3-phosphate + an acyl-CoA = a 1,2-diacyl-sn-glycero-3-phosphate + CoA. It carries out the reaction 1-(9Z-octadecenoyl)-sn-glycero-3-phosphate + (9Z)-octadecenoyl-CoA = 1,2-di-(9Z-octadecenoyl)-sn-glycero-3-phosphate + CoA. The enzyme catalyses 1-(9Z-octadecenoyl)-sn-glycero-3-phosphate + hexadecanoyl-CoA = 1-(9Z)-octadecenoyl-2-hexadecanoyl-sn-glycero-3-phosphate + CoA. It catalyses the reaction heptadecanoyl-CoA + 1-(9Z-octadecenoyl)-sn-glycero-3-phosphate = 1-(9Z)-octadecenoyl-2-heptadecanoyl-sn-glycero-3-phosphate + CoA. The catalysed reaction is 1-(9Z-octadecenoyl)-sn-glycero-3-phosphate + octadecanoyl-CoA = 1-(9Z-octadecenoyl)-2-octadecanoyl-sn-glycero-3-phosphate + CoA. It carries out the reaction 1-(9Z-octadecenoyl)-sn-glycero-3-phosphate + (9Z,12Z)-octadecadienoyl-CoA = 1-(9Z)-octadecenoyl-2-(9Z,12Z)-octadecadienoyl-sn-glycero-3-phosphate + CoA. The enzyme catalyses 1-(9Z-octadecenoyl)-sn-glycero-3-phosphate + tetradecanoyl-CoA = 1-(9Z)-octadecenoyl-2-tetradecanoyl-sn-glycero-3-phosphate + CoA. It catalyses the reaction pentadecanoyl-CoA + 1-(9Z-octadecenoyl)-sn-glycero-3-phosphate = 1-(9Z)-octadecenoyl-2-pentadecanoyl-sn-glycero-3-phosphate + CoA. The catalysed reaction is 1-hexadecanoyl-sn-glycero-3-phosphate + (9Z)-octadecenoyl-CoA = 1-hexadecanoyl-2-(9Z-octadecenoyl)-sn-glycero-3-phosphate + CoA. It carries out the reaction 1-(9Z,12Z,15Z)-octadecatrienoyl-sn-glycero-3-phosphate + (9Z)-octadecenoyl-CoA = 1-(9Z,12Z,15Z)-octadecatrienoyl-2-(9Z)-octadecenoyl-sn-glycero-3-phosphate + CoA. The enzyme catalyses 1-(6Z,9Z,12Z-octadecatrienoyl)-sn-glycero-3-phosphate + (9Z)-octadecenoyl-CoA = (6Z,9Z,12Z)-octadecatrienoyl-2-(9Z)-octadecenoyl-sn-glycero-3-phosphate + CoA. It catalyses the reaction 1-eicosanoyl-sn-glycero-3-phosphate + (9Z)-octadecenoyl-CoA = 1-eicosanoyl-2-(9Z)-octadecenoyl-sn-glycero-3-phosphate + CoA. The catalysed reaction is 1-tetradecanoyl-sn-glycerol 3-phosphate + (9Z)-octadecenoyl-CoA = 1-tetradecanoyl-2-(9Z)-octadecenoyl-sn-glycero-3-phosphate + CoA. It carries out the reaction 1-(9Z-octadecenoyl)-sn-glycero-3-phosphate + (5Z,8Z,11Z,14Z)-eicosatetraenoyl-CoA = 1-(9Z)-octadecenoyl-2-(5Z,8Z,11Z,14Z)-eicosatetraenoyl-sn-glycero-3-phosphate + CoA. The enzyme catalyses 1-(9Z-octadecenoyl)-sn-glycero-3-phosphate + dodecanoyl-CoA = 1-(9Z)-octadecenoyl-2-dodecanoyl-sn-glycero-3-phosphate + CoA. It catalyses the reaction (6Z)-octadecenoyl-CoA + 1-(9Z-octadecenoyl)-sn-glycero-3-phosphate = 1-(9Z)-octadecenoyl-2-(6Z)-octadecenoyl-sn-glycero-3-phosphate + CoA. The catalysed reaction is (11Z)-octadecenoyl-CoA + 1-(9Z-octadecenoyl)-sn-glycero-3-phosphate = 1-(9Z)-octadecenoyl-2-(11Z)-octadecenoyl-sn-glycero-3-phosphate + CoA. It carries out the reaction (9Z)-hexadecenoyl-CoA + 1-(9Z-octadecenoyl)-sn-glycero-3-phosphate = 1-(9Z-octadecenoyl)-2-(9Z-hexadecenoyl)-sn-glycero-3-phosphate + CoA. The protein operates within phospholipid metabolism; CDP-diacylglycerol biosynthesis; CDP-diacylglycerol from sn-glycerol 3-phosphate: step 2/3. Its function is as follows. Converts 1-acyl-sn-glycerol-3-phosphate (lysophosphatidic acid or LPA) into 1,2-diacyl-sn-glycerol-3-phosphate (phosphatidic acid or PA) by incorporating an acyl moiety at the sn-2 position of the glycerol backbone. In Homo sapiens (Human), this protein is 1-acyl-sn-glycerol-3-phosphate acyltransferase alpha (AGPAT1).